The following is a 975-amino-acid chain: Glycine dehydrogenase (decarboxylating) (975 aa).

The residue at position 702 (K702) is an N6-(pyridoxal phosphate)lysine.

It belongs to the GcvP family. The glycine cleavage system is composed of four proteins: P, T, L and H. It depends on pyridoxal 5'-phosphate as a cofactor.

It catalyses the reaction N(6)-[(R)-lipoyl]-L-lysyl-[glycine-cleavage complex H protein] + glycine + H(+) = N(6)-[(R)-S(8)-aminomethyldihydrolipoyl]-L-lysyl-[glycine-cleavage complex H protein] + CO2. Functionally, the glycine cleavage system catalyzes the degradation of glycine. The P protein binds the alpha-amino group of glycine through its pyridoxal phosphate cofactor; CO(2) is released and the remaining methylamine moiety is then transferred to the lipoamide cofactor of the H protein. In Xanthomonas campestris pv. campestris (strain 8004), this protein is Glycine dehydrogenase (decarboxylating).